The primary structure comprises 102 residues: RNA-binding protein Hfq (102 aa).

One can recognise a Sm domain in the interval 9–68 (DPFLNALRRERVPVSIYLVNGIKLQGQIESFDQFVILLKNTVSQMVYKHAISTVVPSRPV). The tract at residues 63–102 (VPSRPVSHHSNNTGGGSNNYHHGSSPAPSSQPQQDSADAE) is disordered. The span at 70–102 (HHSNNTGGGSNNYHHGSSPAPSSQPQQDSADAE) shows a compositional bias: low complexity.

Belongs to the Hfq family. As to quaternary structure, homohexamer.

Functionally, RNA chaperone that binds small regulatory RNA (sRNAs) and mRNAs to facilitate mRNA translational regulation in response to envelope stress, environmental stress and changes in metabolite concentrations. Also binds with high specificity to tRNAs. This Erwinia tasmaniensis (strain DSM 17950 / CFBP 7177 / CIP 109463 / NCPPB 4357 / Et1/99) protein is RNA-binding protein Hfq.